Here is a 295-residue protein sequence, read N- to C-terminus: Bifunctional protein FolD (295 aa).

NADP(+) contacts are provided by residues Gly166 to Ser168, Ser191, and Ile232.

This sequence belongs to the tetrahydrofolate dehydrogenase/cyclohydrolase family. In terms of assembly, homodimer.

The enzyme catalyses (6R)-5,10-methylene-5,6,7,8-tetrahydrofolate + NADP(+) = (6R)-5,10-methenyltetrahydrofolate + NADPH. It catalyses the reaction (6R)-5,10-methenyltetrahydrofolate + H2O = (6R)-10-formyltetrahydrofolate + H(+). It functions in the pathway one-carbon metabolism; tetrahydrofolate interconversion. Catalyzes the oxidation of 5,10-methylenetetrahydrofolate to 5,10-methenyltetrahydrofolate and then the hydrolysis of 5,10-methenyltetrahydrofolate to 10-formyltetrahydrofolate. The polypeptide is Bifunctional protein FolD (Rhodopseudomonas palustris (strain ATCC BAA-98 / CGA009)).